A 58-amino-acid chain; its full sequence is Small ribosomal subunit protein bS21 (58 aa).

The tract at residues 25–58 (KAGTLQEARKREHYEKPSVKRKRKSEAARKRKKI) is disordered. A compositionally biased stretch (basic and acidic residues) spans 31-42 (EARKREHYEKPS). Residues 43 to 58 (VKRKRKSEAARKRKKI) are compositionally biased toward basic residues.

Belongs to the bacterial ribosomal protein bS21 family.

This chain is Small ribosomal subunit protein bS21, found in Streptococcus thermophilus (strain ATCC BAA-491 / LMD-9).